The primary structure comprises 271 residues: UPF0758 protein ACIAD3126 (271 aa).

The 123-residue stretch at 120 to 242 (NLNSSRLVLD…TFSFAERALL (123 aa)) folds into the MPN domain. The Zn(2+) site is built by H191, H193, and D204. Positions 191-204 (HNHPFGKAEPSAAD) match the JAMM motif motif.

This sequence belongs to the UPF0758 family.

In Acinetobacter baylyi (strain ATCC 33305 / BD413 / ADP1), this protein is UPF0758 protein ACIAD3126.